The following is a 257-amino-acid chain: UPF0246 protein Mmc1_3117 (257 aa).

This sequence belongs to the UPF0246 family.

The protein is UPF0246 protein Mmc1_3117 of Magnetococcus marinus (strain ATCC BAA-1437 / JCM 17883 / MC-1).